The following is a 1860-amino-acid chain: Proprotein convertase subtilisin/kexin type 5 (1860 aa).

Positions 1 to 32 (MGWGSRCCCPGRLDLLCVLALLGGCLLPVCRT) are cleaved as a signal peptide. Residues 33 to 114 (RVYTNHWAVK…QQVVKKRTKR (82 aa)) constitute a propeptide that is removed on maturation. The Extracellular portion of the chain corresponds to 115–1743 (DYDFSRAQST…VRPATEHFKT (1629 aa)). A Peptidase S8 domain is found at 134-453 (MWYMHCSDNT…FGLMDAEAMV (320 aa)). Residues D171 and H212 each act as charge relay system in the active site. Residues N225 and N381 are each glycosylated (N-linked (GlcNAc...) asparagine). Catalysis depends on S386, which acts as the Charge relay system. Residues 461–601 (TVPRQHVCVE…SLVLYGTSVQ (141 aa)) enclose the P/Homo B domain. The Cell attachment site motif lies at 519 to 521 (RGD). FU repeat units follow at residues 630-680 (EDYA…GHYH), 683-730 (KKRC…GSYQ), 734-777 (KNLC…GRYF), 779-824 (GQDC…SYYF), 832-879 (YKSC…GEYV), 882-927 (HGHC…WKFE), 929-979 (ENQC…GHYA), 982-1028 (GNTC…GEVQ), 1032-1077 (YEEC…KTYS), 1079-1121 (EVEC…GFYG), 1125-1168 (MGEC…KTQE), 1177-1221 (LRKL…GTWP), 1225-1272 (SGSC…GSYA), 1274-1318 (DGIC…RHVA), 1320-1363 (KGVC…GFYA), 1365-1411 (SRHC…GTYY), 1415-1461 (TKEC…SEYW), 1465-1510 (APGC…GYYA), 1514-1559 (SNRC…GYYA), 1563-1610 (TGRC…HYYV), 1614-1659 (TQTC…GEYR), and 1665-1712 (KFNC…SDPP). Positions 636-1727 (CDPECSEVGC…CDCQDTTDEC (1092 aa)) are CRM (Cys-rich motif). The N-linked (GlcNAc...) asparagine glycan is linked to N665. 3 N-linked (GlcNAc...) asparagine glycosylation sites follow: N752, N802, and N852. Positions 869–913 (MGAICKDGEYVDEHGHCQTCEASCAKCQGPTQEDCTTCPMTRIFD) constitute a PLAC domain. A glycan (N-linked (GlcNAc...) asparagine) is linked at N1014. N1191 carries N-linked (GlcNAc...) asparagine glycosylation. Residue N1290 is glycosylated (N-linked (GlcNAc...) asparagine). Residue N1497 is glycosylated (N-linked (GlcNAc...) asparagine). N1685 and N1707 each carry an N-linked (GlcNAc...) asparagine glycan. The helical transmembrane segment at 1744–1764 (ALFITSSMMLVLLLGAAVVVW) threads the bilayer. Residues 1765–1860 (KKSRGRVQPA…YDDESYSYYQ (96 aa)) lie on the Cytoplasmic side of the membrane. AC stretches follow at residues 1807-1826 (VIEY…IVYM) and 1838-1860 (YGLL…SYYQ).

It belongs to the peptidase S8 family. As to expression, expressed in T-lymphocytes.

It is found in the secreted. Its subcellular location is the endomembrane system. Functionally, serine endoprotease that processes various proproteins by cleavage at paired basic amino acids, recognizing the RXXX[KR]R consensus motif. Likely functions in the constitutive and regulated secretory pathways. Plays an essential role in pregnancy establishment by proteolytic activation of a number of important factors such as BMP2, CALD1 and alpha-integrins. This Homo sapiens (Human) protein is Proprotein convertase subtilisin/kexin type 5 (PCSK5).